The sequence spans 164 residues: ATP synthase subunit b 2 (164 aa).

Residues 4–24 traverse the membrane as a helical segment; it reads TFWAFVGLVLFLALLVYFQIP.

Belongs to the ATPase B chain family. In terms of assembly, F-type ATPases have 2 components, F(1) - the catalytic core - and F(0) - the membrane proton channel. F(1) has five subunits: alpha(3), beta(3), gamma(1), delta(1), epsilon(1). F(0) has three main subunits: a(1), b(2) and c(10-14). The alpha and beta chains form an alternating ring which encloses part of the gamma chain. F(1) is attached to F(0) by a central stalk formed by the gamma and epsilon chains, while a peripheral stalk is formed by the delta and b chains.

It localises to the cell inner membrane. In terms of biological role, f(1)F(0) ATP synthase produces ATP from ADP in the presence of a proton or sodium gradient. F-type ATPases consist of two structural domains, F(1) containing the extramembraneous catalytic core and F(0) containing the membrane proton channel, linked together by a central stalk and a peripheral stalk. During catalysis, ATP synthesis in the catalytic domain of F(1) is coupled via a rotary mechanism of the central stalk subunits to proton translocation. Component of the F(0) channel, it forms part of the peripheral stalk, linking F(1) to F(0). This is ATP synthase subunit b 2 from Bartonella tribocorum (strain CIP 105476 / IBS 506).